Consider the following 104-residue polypeptide: NADH-quinone oxidoreductase subunit K (104 aa).

3 consecutive transmembrane segments (helical) span residues 7-27 (PDMA…GVLV), 31-51 (LLFM…AFVA), and 63-83 (VMFL…LAIL).

It belongs to the complex I subunit 4L family. NDH-1 is composed of 14 different subunits. Subunits NuoA, H, J, K, L, M, N constitute the membrane sector of the complex.

The protein resides in the cell inner membrane. It carries out the reaction a quinone + NADH + 5 H(+)(in) = a quinol + NAD(+) + 4 H(+)(out). Functionally, NDH-1 shuttles electrons from NADH, via FMN and iron-sulfur (Fe-S) centers, to quinones in the respiratory chain. The immediate electron acceptor for the enzyme in this species is believed to be ubiquinone. Couples the redox reaction to proton translocation (for every two electrons transferred, four hydrogen ions are translocated across the cytoplasmic membrane), and thus conserves the redox energy in a proton gradient. The polypeptide is NADH-quinone oxidoreductase subunit K (Gluconacetobacter diazotrophicus (strain ATCC 49037 / DSM 5601 / CCUG 37298 / CIP 103539 / LMG 7603 / PAl5)).